Reading from the N-terminus, the 530-residue chain is Tegument protein UL21 homolog (530 aa).

It belongs to the alphaherpesvirinae UL21 protein family. As to quaternary structure, interacts (via C-terminus) with UL16.

The protein resides in the virion tegument. It localises to the host cytoplasm. The protein localises to the host nucleus. Functionally, may participate in DNA packaging/capsid maturation events. Promotes efficient incorporation of tegument proteins UL46, UL49, and US3 homologs into virions. May also play a role in capsid transport to the trans-Golgi network (TGN). This Equus caballus (Horse) protein is Tegument protein UL21 homolog.